We begin with the raw amino-acid sequence, 329 residues long: Sex comb on midleg-like protein 1 (329 aa).

A disordered region spans residues 125–194; the sequence is NEVHESFSYP…SDFSEHNYQP (70 aa). S138 bears the Phosphoserine mark. Positions 159 to 168 are enriched in basic and acidic residues; the sequence is FRMEEYQRAE. Residue S238 is modified to Phosphoserine. Positions 258–325 constitute an SAM domain; sequence WSVEAVVLFL…YYIDRLKQGK (68 aa).

This sequence belongs to the SCM family. Highly expressed in testis and pancreas. Preferentially expressed in the germ stem cells of testis.

The protein localises to the nucleus. Its function is as follows. Putative Polycomb group (PcG) protein. PcG proteins act by forming multiprotein complexes, which are required to maintain the transcriptionally repressive state of homeotic genes throughout development. May be involved in spermatogenesis during sexual maturation. This is Sex comb on midleg-like protein 1 (SCML1) from Macaca mulatta (Rhesus macaque).